An 801-amino-acid polypeptide reads, in one-letter code: Phenylalanine--tRNA ligase beta subunit (801 aa).

Positions 39–153 (AEGLSKLVVG…EEAVPGDAIF (115 aa)) constitute a tRNA-binding domain. Residues 406–481 (TEPVEVSTSL…RIYGYDKLPT (76 aa)) enclose the B5 domain. Mg(2+)-binding residues include D459, D465, E468, and E469. Positions 708–801 (TKFPAMTRDI…LTEQVGAEVR (94 aa)) constitute an FDX-ACB domain.

The protein belongs to the phenylalanyl-tRNA synthetase beta subunit family. Type 1 subfamily. As to quaternary structure, tetramer of two alpha and two beta subunits. Mg(2+) serves as cofactor.

The protein localises to the cytoplasm. It carries out the reaction tRNA(Phe) + L-phenylalanine + ATP = L-phenylalanyl-tRNA(Phe) + AMP + diphosphate + H(+). In Streptococcus pyogenes serotype M18 (strain MGAS8232), this protein is Phenylalanine--tRNA ligase beta subunit.